Here is a 695-residue protein sequence, read N- to C-terminus: NADPH--cytochrome P450 reductase (695 aa).

At 1–8 (MAQLDTLD) the chain is on the lumenal side. Residues 9-31 (LVVLVVLLVGSAAYFTKGTYWAV) traverse the membrane as a helical segment. Residues 32 to 695 (PKDPYAASGP…SGSYQEDVWS (664 aa)) lie on the Cytoplasmic side of the membrane. One can recognise a Flavodoxin-like domain in the interval 66–221 (CVIFYGSQTG…DFLAWKEPMW (156 aa)). Residues 72 to 77 (SQTGTA), 123 to 126 (ATYG), 169 to 178 (LGNNTYEHYQ), and aspartate 204 each bind FMN. In terms of domain architecture, FAD-binding FR-type spans 277-538 (HNPFIAPIVE…HVRHSNFKLP (262 aa)). Position 296 (arginine 296) interacts with NADP(+). Residues 451–454 (RYYS), 469–471 (TAV), and 486–489 (GVTT) contribute to the FAD site. NADP(+)-binding positions include threonine 552, 614-615 (SR), 620-624 (KVYVQ), and glutamate 656. Residue tryptophan 694 coordinates FAD.

It belongs to the NADPH--cytochrome P450 reductase family. The protein in the N-terminal section; belongs to the flavodoxin family. This sequence in the C-terminal section; belongs to the flavoprotein pyridine nucleotide cytochrome reductase family. The cofactor is FAD. FMN is required as a cofactor.

It is found in the endoplasmic reticulum membrane. The protein resides in the mitochondrion outer membrane. The protein localises to the cell membrane. It catalyses the reaction 2 oxidized [cytochrome P450] + NADPH = 2 reduced [cytochrome P450] + NADP(+) + H(+). Its function is as follows. This enzyme is required for electron transfer from NADP to cytochrome P450 in microsomes. It can also provide electron transfer to heme oxygenase and cytochrome B5. Involved in ergosterol biosynthesis. In Aspergillus terreus (strain NIH 2624 / FGSC A1156), this protein is NADPH--cytochrome P450 reductase.